Here is a 453-residue protein sequence, read N- to C-terminus: tRNA-2-methylthio-N(6)-dimethylallyladenosine synthase (453 aa).

In terms of domain architecture, MTTase N-terminal spans 7–123 (GTYWITTFGC…LDTLLSQVEA (117 aa)). [4Fe-4S] cluster contacts are provided by C16, C52, C86, C158, C162, and C165. The 238-residue stretch at 144-381 (RDSSLCAWVN…NALVERKAKA (238 aa)) folds into the Radical SAM core domain. The TRAM domain maps to 384–447 (QRYLGRVEEV…AFSLSGSAQA (64 aa)).

The protein belongs to the methylthiotransferase family. MiaB subfamily. In terms of assembly, monomer. Requires [4Fe-4S] cluster as cofactor.

Its subcellular location is the cytoplasm. It carries out the reaction N(6)-dimethylallyladenosine(37) in tRNA + (sulfur carrier)-SH + AH2 + 2 S-adenosyl-L-methionine = 2-methylsulfanyl-N(6)-dimethylallyladenosine(37) in tRNA + (sulfur carrier)-H + 5'-deoxyadenosine + L-methionine + A + S-adenosyl-L-homocysteine + 2 H(+). Functionally, catalyzes the methylthiolation of N6-(dimethylallyl)adenosine (i(6)A), leading to the formation of 2-methylthio-N6-(dimethylallyl)adenosine (ms(2)i(6)A) at position 37 in tRNAs that read codons beginning with uridine. The protein is tRNA-2-methylthio-N(6)-dimethylallyladenosine synthase of Synechococcus sp. (strain RCC307).